Reading from the N-terminus, the 72-residue chain is uncharacterized protein (72 aa).

Residues 33-53 (VCIFFSLIFFFFFFFFCVNWG) traverse the membrane as a helical segment.

The protein resides in the membrane. This is an uncharacterized protein from Dictyostelium discoideum (Social amoeba).